The sequence spans 491 residues: Transmembrane protein 200A (491 aa).

Residues 1–61 (MIATGGVITG…RGKIRLYSPS (61 aa)) lie on the Cytoplasmic side of the membrane. Residues 16-41 (RQDSARSQQHVNLSPSPATQEKKPIR) are disordered. A compositionally biased stretch (polar residues) spans 20–34 (ARSQQHVNLSPSPAT). A helical transmembrane segment spans residues 62-82 (GFFLILGVLISIIGIAMAVLG). Residues 83-126 (YWPQKEHFIDAETTLSTNETQVIRNEGGVVVRFFEQHLHSDKMK) lie on the Extracellular side of the membrane. Asn100 carries an N-linked (GlcNAc...) asparagine glycan. The helical transmembrane segment at 127 to 147 (MLGPFTMGIGIFIFICANAIL) threads the bilayer. The Cytoplasmic portion of the chain corresponds to 148–491 (HENRDKETKI…LKRGTSETRF (344 aa)). Ser350 is subject to Phosphoserine.

The protein belongs to the TMEM200 family. In terms of tissue distribution, expressed in cerebellum.

It is found in the membrane. This chain is Transmembrane protein 200A (TMEM200A), found in Homo sapiens (Human).